Here is a 121-residue protein sequence, read N- to C-terminus: Large ribosomal subunit protein bL19 (121 aa).

It belongs to the bacterial ribosomal protein bL19 family.

In terms of biological role, this protein is located at the 30S-50S ribosomal subunit interface and may play a role in the structure and function of the aminoacyl-tRNA binding site. This chain is Large ribosomal subunit protein bL19, found in Legionella pneumophila (strain Paris).